The sequence spans 155 residues: Troponin C, isoform 2 (155 aa).

4 consecutive EF-hand domains span residues 11–46 (EQIA…MGQP), 47–82 (FDRQ…FIVE), 87–122 (AMQK…LDDQ), and 123–155 (LTEQ…MTGE). Ca(2+) is bound by residues Asp60, Asp62, Ser64, Arg66, and Glu71. The Ca(2+) site is built by Asp136, Asp138, Ser140, Thr142, and Glu147.

The protein belongs to the troponin C family. Accumulates almost exclusively in larval muscles.

This Drosophila melanogaster (Fruit fly) protein is Troponin C, isoform 2 (TpnC47D).